Reading from the N-terminus, the 193-residue chain is NAD(P)H-quinone oxidoreductase subunit I (193 aa).

4Fe-4S ferredoxin-type domains lie at 55–84 and 95–124; these read GRIHFEFDKCISCEVCVRVCPINLPVVDWE and KHYSIDFGVCIFCANCVEYCPTNCLSVTEE. Residues cysteine 64, cysteine 67, cysteine 70, cysteine 74, cysteine 104, cysteine 107, cysteine 110, and cysteine 114 each contribute to the [4Fe-4S] cluster site.

It belongs to the complex I 23 kDa subunit family. As to quaternary structure, NDH-1 is composed of at least 11 different subunits. [4Fe-4S] cluster serves as cofactor.

The protein localises to the cellular thylakoid membrane. The catalysed reaction is a plastoquinone + NADH + (n+1) H(+)(in) = a plastoquinol + NAD(+) + n H(+)(out). The enzyme catalyses a plastoquinone + NADPH + (n+1) H(+)(in) = a plastoquinol + NADP(+) + n H(+)(out). Functionally, NDH-1 shuttles electrons from an unknown electron donor, via FMN and iron-sulfur (Fe-S) centers, to quinones in the respiratory and/or the photosynthetic chain. The immediate electron acceptor for the enzyme in this species is believed to be plastoquinone. Couples the redox reaction to proton translocation, and thus conserves the redox energy in a proton gradient. This chain is NAD(P)H-quinone oxidoreductase subunit I, found in Cyanothece sp. (strain PCC 7425 / ATCC 29141).